The sequence spans 201 residues: Putative manganese efflux pump MntP (201 aa).

The next 6 membrane-spanning stretches (helical) occupy residues 3 to 23, 39 to 59, 65 to 85, 116 to 136, 141 to 161, and 176 to 196; these read LVSIILISIGLSMDAFAVSIT, IGLFFGGFQALMPLIGWSIGI, IAALDHWIALILLSIIGGKMI, LTLLAIATSIDALAIGVSFAF, IINTIIIIGSITFVICFIGVM, and ILGGIVLIFIGIKIFIEHTNI.

Belongs to the MntP (TC 9.B.29) family.

It is found in the cell membrane. Functionally, probably functions as a manganese efflux pump. This chain is Putative manganese efflux pump MntP, found in Clostridium botulinum (strain Loch Maree / Type A3).